The chain runs to 139 residues: Large ribosomal subunit protein uL16c (139 aa).

Basic residues predominate over residues Met1–Met17. The segment at Met1–Lys23 is disordered.

The protein belongs to the universal ribosomal protein uL16 family. As to quaternary structure, part of the 50S ribosomal subunit.

It localises to the plastid. Its subcellular location is the chloroplast. This chain is Large ribosomal subunit protein uL16c, found in Pyropia yezoensis (Susabi-nori).